Reading from the N-terminus, the 1154-residue chain is Large proline-rich protein BAG6 (1154 aa).

N-acetylmethionine is present on methionine 1. A Ubiquitin-like domain is found at 17–92 (LEVLVKTLDS…HLVERAPPQT (76 aa)). 5 disordered regions span residues 87 to 125 (RAPP…ASVH), 186 to 274 (RGGT…HPSP), 387 to 442 (TMTG…SSHP), 463 to 531 (QDSG…QGAG), and 568 to 626 (AQAQ…SAAD). Phosphoserine is present on serine 96. The span at 96 to 112 (SGASSGTGSASATHGGA) shows a compositional bias: low complexity. At threonine 117 the chain carries Phosphothreonine. The span at 209–218 (VALNSQTSEP) shows a compositional bias: polar residues. Repeat unit 1 spans residues 237–271 (RPPTQTPELAPSGPAPAGPAPAGPAPAPETNAPNH). The 4 X 29 AA approximate repeats stretch occupies residues 237–658 (RPPTQTPELA…MASPTITVAM (422 aa)). The segment covering 249–263 (GPAPAGPAPAGPAPA) has biased composition (pro residues). Residues 400–409 (GAEAATPGSA) are compositionally biased toward low complexity. The segment covering 410–426 (QATSLPPSSTTVDSSTE) has biased composition (polar residues). Repeat unit 2 spans residues 416 to 444 (PSSTTVDSSTEGAPPPGPAPPPASSHPRV). 2 stretches are compositionally biased toward pro residues: residues 428–439 (APPPGPAPPPAS) and 508–521 (PTPP…PGGP). 2 stretches are compositionally biased toward low complexity: residues 568-581 (AQAQ…AQAP) and 591-609 (PATA…TAGP). 2 consecutive repeat copies span residues 597 to 624 (SAGT…QPSA) and 630 to 658 (SQLL…TVAM). Over residues 611–622 (PGGPAQPPPPQP) the composition is skewed to pro residues. Disordered stretches follow at residues 673 to 719 (QASQ…ESLP) and 968 to 1154 (PPQT…ADDP). Positions 678-702 (APPPPPPPPPPPPAPEQQSTPPPGS) are enriched in pro residues. A phosphoserine mark is found at serine 986 and serine 995. Residues 1029 to 1042 (AEPWAAAVPPEWVP) are compositionally biased toward low complexity. The tract at residues 1032-1062 (WAAAVPPEWVPIIQQDIQSQRKVKPQPPLSD) is required for interaction with GET4. The Nuclear localization site signature appears at 1034–1076 (AAVPPEWVPIIQQDIQSQRKVKPQPPLSDAYLSGMPAKRRKTM). Positions 1044 to 1154 (IQQDIQSQRK…NAHRAFADDP (111 aa)) are sufficient for the delivery of client proteins to the endoplasmic reticulum. The residue at position 1075 (threonine 1075) is a Phosphothreonine. The interval 1080-1137 (GPQLLLSEAVSRAAKAAGARPLTSPESLSRDLEAPEVQESYRQQLRSDIQKRLQEDPN) is BAG-similar domain, required and sufficient for interaction with UBL4A. Over residues 1088-1098 (AVSRAAKAAGA) the composition is skewed to low complexity. A phosphoserine mark is found at serine 1103 and serine 1139.

As to quaternary structure, component of the BAG6/BAT3 complex, also named BAT3 complex, at least composed of BAG6, UBL4A and GET4/TRC35. Interacts with GET4; the interaction is direct and localizes BAG6 in the cytosol. Interacts with UBL4A; the interaction is direct and required for UBL4A protein stability. Interacts with AIFM1. Interacts with HSPA2. Interacts with CTCFL. Interacts with p300/EP300. Interacts (via ubiquitin-like domain) with RNF126; required for BAG6-dependent ubiquitination of proteins mislocalized to the cytosol. Interacts (via ubiquitin-like domain) with SGTA; SGTA competes with RNF126 by binding the same region of BAG6, thereby promoting deubiquitination of BAG6-target proteins and rescuing them from degradation. Interacts with ricin A chain. Interacts with VCP and AMFR; both form the VCP/p97-AMFR/gp78 complex. Interacts with SYVN1. Interacts with USP13; the interaction is direct and may mediate UBL4A deubiquitination. Interacts with ZFAND2B. Interacts with KPNA2. Interacts with UBQLN4. Ricin can induce a cleavage by the caspase CASP3. The released C-terminal peptide induces apoptosis.

Its subcellular location is the cytoplasm. The protein localises to the cytosol. The protein resides in the nucleus. It is found in the secreted. It localises to the extracellular exosome. Its function is as follows. ATP-independent molecular chaperone preventing the aggregation of misfolded and hydrophobic patches-containing proteins. Functions as part of a cytosolic protein quality control complex, the BAG6/BAT3 complex, which maintains these client proteins in a soluble state and participates in their proper delivery to the endoplasmic reticulum or alternatively can promote their sorting to the proteasome where they undergo degradation. The BAG6/BAT3 complex is involved in the post-translational delivery of tail-anchored/type II transmembrane proteins to the endoplasmic reticulum membrane. Recruited to ribosomes, it interacts with the transmembrane region of newly synthesized tail-anchored proteins and together with SGTA and ASNA1 mediates their delivery to the endoplasmic reticulum. Client proteins that cannot be properly delivered to the endoplasmic reticulum are ubiquitinated by RNF126, an E3 ubiquitin-protein ligase associated with BAG6 and are sorted to the proteasome. SGTA which prevents the recruitment of RNF126 to BAG6 may negatively regulate the ubiquitination and the proteasomal degradation of client proteins. Similarly, the BAG6/BAT3 complex also functions as a sorting platform for proteins of the secretory pathway that are mislocalized to the cytosol either delivering them to the proteasome for degradation or to the endoplasmic reticulum. The BAG6/BAT3 complex also plays a role in the endoplasmic reticulum-associated degradation (ERAD), a quality control mechanism that eliminates unwanted proteins of the endoplasmic reticulum through their retrotranslocation to the cytosol and their targeting to the proteasome. It maintains these retrotranslocated proteins in an unfolded yet soluble state condition in the cytosol to ensure their proper delivery to the proteasome. BAG6 is also required for selective ubiquitin-mediated degradation of defective nascent chain polypeptides by the proteasome. In this context, it may participate in the production of antigenic peptides and play a role in antigen presentation in immune response. BAG6 is also involved in endoplasmic reticulum stress-induced pre-emptive quality control, a mechanism that selectively attenuates the translocation of newly synthesized proteins into the endoplasmic reticulum and reroutes them to the cytosol for proteasomal degradation. BAG6 may ensure the proper degradation of these proteins and thereby protects the endoplasmic reticulum from protein overload upon stress. By inhibiting the polyubiquitination and subsequent proteasomal degradation of HSPA2 it may also play a role in the assembly of the synaptonemal complex during spermatogenesis. Also positively regulates apoptosis by interacting with and stabilizing the proapoptotic factor AIFM1. By controlling the steady-state expression of the IGF1R receptor, indirectly regulates the insulin-like growth factor receptor signaling pathway. In terms of biological role, involved in DNA damage-induced apoptosis: following DNA damage, accumulates in the nucleus and forms a complex with p300/EP300, enhancing p300/EP300-mediated p53/TP53 acetylation leading to increase p53/TP53 transcriptional activity. When nuclear, may also act as a component of some chromatin regulator complex that regulates histone 3 'Lys-4' dimethylation (H3K4me2). Released extracellularly via exosomes, it is a ligand of the natural killer/NK cells receptor NCR3 and stimulates NK cells cytotoxicity. It may thereby trigger NK cells cytotoxicity against neighboring tumor cells and immature myeloid dendritic cells (DC). Functionally, may mediate ricin-induced apoptosis. The chain is Large proline-rich protein BAG6 from Mus musculus (Mouse).